The sequence spans 175 residues: Protein LpfE (175 aa).

Positions 1–20 (MKNLHALMPACLLLTASAMA) are cleaved as a signal peptide.

The protein belongs to the fimbrial protein family.

The protein localises to the fimbrium. The chain is Protein LpfE (lpfE) from Salmonella typhimurium (strain LT2 / SGSC1412 / ATCC 700720).